The primary structure comprises 75 residues: Cytochrome c oxidase assembly factor 5 (75 aa).

A CHCH domain is found at 28–66 (QTDCVLQEGKSPKECLKEGYCKALQVTFFECKRSILDTR). A Cx10C motif motif is present at residues 31–42 (CVLQEGKSPKEC). 2 disulfides stabilise this stretch: cysteine 31-cysteine 58 and cysteine 42-cysteine 48. Residues 48-58 (CKALQVTFFEC) carry the Cx9C motif motif.

The protein belongs to the PET191 family.

In terms of biological role, involved in an early step of the mitochondrial complex IV assembly process. This chain is Cytochrome c oxidase assembly factor 5 (coa5), found in Xenopus tropicalis (Western clawed frog).